The chain runs to 445 residues: Probable multidrug resistance protein YpnP (445 aa).

The next 12 membrane-spanning stretches (helical) occupy residues 15 to 35 (LVLF…FQFI), 49 to 69 (LGAA…ILGL), 95 to 115 (AFVV…FFLS), 136 to 156 (LQIQ…STVL), 168 to 188 (FIAF…SVFR), 194 to 214 (AAYS…FYVI), 240 to 260 (IPAG…MSVV), 277 to 297 (LDSI…SMAG), 314 to 334 (LGVI…WVFG), 355 to 375 (LKWI…NGIV), 384 to 404 (VLVL…ALFS), and 411 to 431 (GIGL…FLYY).

This sequence belongs to the multi antimicrobial extrusion (MATE) (TC 2.A.66.1) family.

Its subcellular location is the cell membrane. In Bacillus subtilis (strain 168), this protein is Probable multidrug resistance protein YpnP (ypnP).